The following is a 391-amino-acid chain: ATP phosphoribosyltransferase regulatory subunit (391 aa).

It belongs to the class-II aminoacyl-tRNA synthetase family. HisZ subfamily. Heteromultimer composed of HisG and HisZ subunits.

It is found in the cytoplasm. It participates in amino-acid biosynthesis; L-histidine biosynthesis; L-histidine from 5-phospho-alpha-D-ribose 1-diphosphate: step 1/9. Required for the first step of histidine biosynthesis. May allow the feedback regulation of ATP phosphoribosyltransferase activity by histidine. In Nitrosomonas europaea (strain ATCC 19718 / CIP 103999 / KCTC 2705 / NBRC 14298), this protein is ATP phosphoribosyltransferase regulatory subunit.